Reading from the N-terminus, the 68-residue chain is Protein transport protein Sec61 subunit gamma (68 aa).

Topologically, residues 1–32 (MDQVMQFVEPSRQFVKDSIRLVKRCTKPDRKE) are cytoplasmic. The chain crosses the membrane as a helical span at residues 33–61 (FQKIAMATAIGFAIMGFIGFFVKLIHIPI). Topologically, residues 62 to 68 (NNIIVGS) are extracellular.

This sequence belongs to the SecE/SEC61-gamma family. In terms of assembly, the SEC61 channel-forming translocon complex consists of channel-forming core components SEC61A1, SEC61B and SEC61G and different auxiliary components such as SEC62 and SEC63. The SEC61 channel associates with the multi-pass translocon (MPT) complex.

The protein localises to the endoplasmic reticulum membrane. Its function is as follows. Component of SEC61 channel-forming translocon complex that mediates transport of signal peptide-containing precursor polypeptides across the endoplasmic reticulum (ER). Forms a ribosome receptor and a gated pore in the ER membrane, both functions required for cotranslational translocation of nascent polypeptides. The SEC61 channel is also involved in ER membrane insertion of transmembrane proteins: it mediates membrane insertion of the first few transmembrane segments of proteins, while insertion of subsequent transmembrane regions of multi-pass membrane proteins is mediated by the multi-pass translocon (MPT) complex. The sequence is that of Protein transport protein Sec61 subunit gamma (sec61g) from Xenopus laevis (African clawed frog).